A 443-amino-acid polypeptide reads, in one-letter code: Adenylate cyclase (443 aa).

The next 6 membrane-spanning stretches (helical) occupy residues 47–69 (VLTI…QLAT), 74–93 (WYIA…VPLL), 98–120 (GLVA…GWDV), 124–143 (AGAQ…LVGI), 148–167 (LAVG…EFLV), and 180–202 (SVSF…WFAL). The Cytoplasmic portion of the chain corresponds to 203-443 (RDTARAEAVM…RGAEPRTAGV (241 aa)). In terms of domain architecture, Guanylate cyclase spans 251 to 378 (SVLFADIVGF…DAVNVASRME (128 aa)). Mg(2+)-binding residues include Asp256 and Asp300.

Belongs to the adenylyl cyclase class-4/guanylyl cyclase family. In terms of assembly, homodimer. Can also exist as monomer. Requires Mg(2+) as cofactor. It depends on Mn(2+) as a cofactor.

Its subcellular location is the cell membrane. The enzyme catalyses ATP = 3',5'-cyclic AMP + diphosphate. This chain is Adenylate cyclase (cya), found in Mycobacterium bovis (strain ATCC BAA-935 / AF2122/97).